The primary structure comprises 221 residues: Orotate phosphoribosyltransferase (221 aa).

Lys26 serves as a coordination point for 5-phospho-alpha-D-ribose 1-diphosphate. Phe34–Phe35 provides a ligand contact to orotate. Residues Tyr72–Lys73, Arg98, Lys99, Lys102, His104, and Asp123–Ser131 contribute to the 5-phospho-alpha-D-ribose 1-diphosphate site. Ser127 and Arg155 together coordinate orotate.

The protein belongs to the purine/pyrimidine phosphoribosyltransferase family. PyrE subfamily. As to quaternary structure, homodimer. Mg(2+) is required as a cofactor.

The enzyme catalyses orotidine 5'-phosphate + diphosphate = orotate + 5-phospho-alpha-D-ribose 1-diphosphate. Its pathway is pyrimidine metabolism; UMP biosynthesis via de novo pathway; UMP from orotate: step 1/2. Catalyzes the transfer of a ribosyl phosphate group from 5-phosphoribose 1-diphosphate to orotate, leading to the formation of orotidine monophosphate (OMP). This Herminiimonas arsenicoxydans protein is Orotate phosphoribosyltransferase.